Reading from the N-terminus, the 1016-residue chain is S-layer protein A (1016 aa).

The first 30 residues, 1-30 (MDLSTKKVISAGLVFIYALSLAMLVPMFLA), serve as a signal peptide directing secretion.

The protein belongs to the Sulfolobales SlaA family. The mushroom-shaped unit cells of the Sulfolobales' S-layers may consist of three SlaB subunits and six SlaA subunits.

The protein localises to the secreted. The protein resides in the cell wall. It is found in the S-layer. In terms of biological role, S-layer large protein. May form the highly ordered outer sheath. In Acidianus ambivalens (Desulfurolobus ambivalens), this protein is S-layer protein A.